Consider the following 87-residue polypeptide: uncharacterized protein (87 aa).

The helical transmembrane segment at 48 to 70 (GIYIPHTLIFWMCPRAMGTAITF) threads the bilayer.

Its subcellular location is the host membrane. This is an uncharacterized protein from Gallid herpesvirus 2 (strain Chicken/Md5/ATCC VR-987) (GaHV-2).